A 504-amino-acid polypeptide reads, in one-letter code: Cytochrome P450 monooxygenase iccC (504 aa).

The helical transmembrane segment at 7-26 threads the bilayer; sequence LPWILLYTGFLAIFLSRLFS. N-linked (GlcNAc...) asparagine glycans are attached at residues Asn-134, Asn-312, Asn-365, and Asn-374. Cys-452 is a binding site for heme. The N-linked (GlcNAc...) asparagine glycan is linked to Asn-494.

The protein belongs to the cytochrome P450 family. Heme is required as a cofactor.

The protein localises to the membrane. It carries out the reaction (3E,5S)-3-[(2E,4E,8S,10E,12Z)-1-hydroxy-4,8-dimethyltetradeca-2,4,10,12-tetraen-1-ylidene]-5-[(4-hydroxyphenyl)methyl]pyrrolidine-2,4-dione + reduced [NADPH--hemoprotein reductase] + O2 = 3-[(2E,4E,8S,10E,12Z)-4,8-dimethyltetradeca-2,4,10,12-tetraenoyl]-4-hydroxy-5-(4-hydroxyphenyl)-1,2-dihydropyridin-2-one + oxidized [NADPH--hemoprotein reductase] + 2 H2O. The protein operates within mycotoxin biosynthesis. Its function is as follows. Cytochrome P450 monooxygenase; part of the gene cluster that mediates the biosynthesis of ilicicolin H, a 4-hydroxy-2-pyridonealkaloid that has potent and broad antifungal activities by inhibiting the mitochondrial respiration chain. IccC catalyzes the ring expansion of the tetramate intermediate to the acyclic 2-pyridone intermediate that contains the trans bis-diene chain. The biosynthesis of ilicicolin H starts with formation of the tetramic acid by the hybrid PKS-NRPS synthetase iccA with the partnering trans-enoyl reductase iccB since iccA lacks a designated enoylreductase (ER) domain. The cytochrome P450 monooxygenase iccC then catalyzes the ring expansion of the tetramate to the acyclic 2-pyridone. The pericyclase iccD further converts the acyclic 2-pyridone into 8-epi-ilicicolin H. Finally, the epimerase iccE converts 8-epi-ilicicolin H into ilicicolin H via epimerization. IccA to iccE are sufficient for ilicicolin H biosynthesis and the roles of the remaining enzymes, iccF, iccG and iccH within the pathway have still to be determined. This is Cytochrome P450 monooxygenase iccC from Talaromyces variabilis (Penicillium variabile).